Consider the following 248-residue polypeptide: Malonyl-[acyl-carrier protein] O-methyltransferase 2 (248 aa).

This sequence belongs to the methyltransferase superfamily.

It carries out the reaction malonyl-[ACP] + S-adenosyl-L-methionine = malonyl-[ACP] methyl ester + S-adenosyl-L-homocysteine. The protein operates within cofactor biosynthesis; biotin biosynthesis. Converts the free carboxyl group of a malonyl-thioester to its methyl ester by transfer of a methyl group from S-adenosyl-L-methionine (SAM). It allows to synthesize pimeloyl-ACP via the fatty acid synthetic pathway. The polypeptide is Malonyl-[acyl-carrier protein] O-methyltransferase 2 (Coxiella burnetii (strain RSA 493 / Nine Mile phase I)).